The primary structure comprises 889 residues: MAAAASSSSAASAPRSGEDIREAFLNFYAERGHQRMASASLIPEDPTVLLTIAGMLPFKPVFLGQQQRPAPRATSSQKCIRTNDIENVGRTARHHTFFEMLGNFSFGDYFKQQAIEWAWELSTQVYGIDPRNLVVSVFREDDEAEQIWRDVVGVNTKRIIRMDEADNFWASGPTGPCGPCSEIYYDFKPELGDDGIDLEDDDRFIEFYNLVFMQYNRDAEGNLTPLANRNIDTGMGLERMAQILQKVPNNYETDLIFPLIQAAADLACVDYAQLDDKGKTSLKVIGDHSRAVTQLICDGVTASNLGRGYILRRLLRRVVRHGRLLGIDKPFLVTMGEAAIDLLKGAHPGVIERQEVILAELQREEARFLETLERGEKLLAEVLASRPTQISGAQAFELYDTYGFPLELTQEIAEEQRITVDLDGFEVAMEEQRQRAKAAAVSIDLTLQDAIEQVAGDQPATAFKGYDALDHPSTVQALVVNGAPASTASAGDVVQVVLDSTPFYGEGGGQVGDRGSLSGVDVIVAIDSVSRSRDVFVHSGRMERGHLAVGDTVNAQVDRSCRRRAQANHTATHLLQAALKQVVDPGIGQAGSLVDFDRLRFDFHCPTAVTAEQLAQIETLINGWIAEAHCLEVQEMAIDQAKAAGAVAMFGEKYADVVRVVDVPGVSMELCGGTHVANTAEIGLFKIVAESGVAAGIRRIEAVAGPAVLAYLNERDAVVKQLGDRFKAQPAEIVDRVTALQEELKATGKALAAAQAELAVAKAGALAAKAEAVGEFQLLVERLDGVEGAGLQGAAQSLADQLGDGAAVVIGGLPDPGDLGKVILVAAFGKQVIAAKLQAGKFIGGIAKQCGGGGGGRPNLAQAGGRDGAALPGALAAARSELAAALPQS.

4 residues coordinate Zn(2+): His-569, His-573, Cys-671, and His-675.

The protein belongs to the class-II aminoacyl-tRNA synthetase family. Zn(2+) is required as a cofactor.

It is found in the cytoplasm. The enzyme catalyses tRNA(Ala) + L-alanine + ATP = L-alanyl-tRNA(Ala) + AMP + diphosphate. In terms of biological role, catalyzes the attachment of alanine to tRNA(Ala) in a two-step reaction: alanine is first activated by ATP to form Ala-AMP and then transferred to the acceptor end of tRNA(Ala). Also edits incorrectly charged Ser-tRNA(Ala) and Gly-tRNA(Ala) via its editing domain. In Parasynechococcus marenigrum (strain WH8102), this protein is Alanine--tRNA ligase.